The following is a 380-amino-acid chain: uncharacterized protein (380 aa).

Positions 1–28 (MQFLSDTQRMVLSRAVCASFFFFHVAVA) are cleaved as a signal peptide. Positions 307 to 380 (AGDEKPRGYQ…DAGYETFPLF (74 aa)) constitute an SPOR domain.

This is an uncharacterized protein from Treponema pallidum (strain Nichols).